The sequence spans 213 residues: Probable anti-sigma-F factor NrsF (213 aa).

The next 6 helical transmembrane spans lie at alanine 27–valine 47, leucine 51–alanine 71, valine 91–isoleucine 111, threonine 126–leucine 146, leucine 159–histidine 179, and phenylalanine 187–glycine 207.

This sequence belongs to the NrsF anti-sigma-F factor family.

It is found in the cell inner membrane. Probably an anti-sigma factor for extracytoplasmic function (ECF) sigma factor sigma-F (SigF), which responds to (hypo)chlorite. ECF sigma factors are held in an inactive form by a cognate anti-sigma factor. This is Probable anti-sigma-F factor NrsF from Azospira oryzae (strain ATCC BAA-33 / DSM 13638 / PS) (Dechlorosoma suillum).